The sequence spans 87 residues: U15-lycotoxin-Ls1f (87 aa).

The first 20 residues, 1 to 20 (MNSKIFAVLLLLAFLSCVLS), serve as a signal peptide directing secretion. Positions 21-66 (DQYCPKSSITACKKMNIRNDCCKDDDCTGGSWCCATPCGNFCKYPT) constitute a WAP domain. Cystine bridges form between C24–C54, C32–C58, C41–C53, C42–C80, and C47–C62.

It belongs to the venom protein 11 family. 01 (wap-1) subfamily. Post-translationally, contains 5 disulfide bonds. Expressed by the venom gland.

Its subcellular location is the secreted. Functionally, has antibacterial activity. This Lycosa singoriensis (Wolf spider) protein is U15-lycotoxin-Ls1f.